The following is a 252-amino-acid chain: Isoprenyl transferase (252 aa).

The active site involves D32. D32 contacts Mg(2+). Substrate-binding positions include G33–R36, W37, R45, H49, and S77–E79. N80 acts as the Proton acceptor in catalysis. Substrate contacts are provided by residues W81, R83, R200, and R206–S208. Mg(2+) is bound at residue E219.

This sequence belongs to the UPP synthase family. As to quaternary structure, homodimer. Mg(2+) is required as a cofactor.

Catalyzes the condensation of isopentenyl diphosphate (IPP) with allylic pyrophosphates generating different type of terpenoids. The sequence is that of Isoprenyl transferase from Listeria monocytogenes serotype 4b (strain F2365).